We begin with the raw amino-acid sequence, 449 residues long: Probable glycine dehydrogenase (decarboxylating) subunit 1 (449 aa).

The protein belongs to the GcvP family. N-terminal subunit subfamily. In terms of assembly, the glycine cleavage system is composed of four proteins: P, T, L and H. In this organism, the P 'protein' is a heterodimer of two subunits.

The catalysed reaction is N(6)-[(R)-lipoyl]-L-lysyl-[glycine-cleavage complex H protein] + glycine + H(+) = N(6)-[(R)-S(8)-aminomethyldihydrolipoyl]-L-lysyl-[glycine-cleavage complex H protein] + CO2. Its function is as follows. The glycine cleavage system catalyzes the degradation of glycine. The P protein binds the alpha-amino group of glycine through its pyridoxal phosphate cofactor; CO(2) is released and the remaining methylamine moiety is then transferred to the lipoamide cofactor of the H protein. This is Probable glycine dehydrogenase (decarboxylating) subunit 1 from Rhodospirillum centenum (strain ATCC 51521 / SW).